Consider the following 691-residue polypeptide: NADPH--cytochrome P450 reductase (691 aa).

At 2 to 7 (PFGIDN) the chain is on the lumenal side. Residues 8 to 24 (TDFTVLAGLVLAVLLYV) traverse the membrane as a helical segment. Over 25 to 691 (KRNSIKELLM…TSGRYQEDVW (667 aa)) the chain is Cytoplasmic. A Flavodoxin-like domain is found at 61 to 204 (YLVLYASQTG…DYMAWKDSIL (144 aa)). FMN-binding positions include 67–72 (SQTGTA), lysine 78, 116–119 (STYG), 152–161 (LGNSTYEFFN), and aspartate 187. The FAD-binding FR-type domain maps to 266–529 (SQPYIAPIVK…HVRRSNFRLP (264 aa)). Arginine 285 is a binding site for NADP(+). FAD is bound by residues 439-442 (RYYS), 457-459 (TSI), and 476-479 (GVTT). NADP(+) is bound by residues threonine 543, 610–611 (SR), 617–621 (KVYVQ), and aspartate 646. Lysine 666 is covalently cross-linked (Glycyl lysine isopeptide (Lys-Gly) (interchain with G-Cter in ubiquitin)). Residue tryptophan 691 participates in FAD binding.

This sequence belongs to the NADPH--cytochrome P450 reductase family. It in the N-terminal section; belongs to the flavodoxin family. The protein in the C-terminal section; belongs to the flavoprotein pyridine nucleotide cytochrome reductase family. As to quaternary structure, interacts with PCL1. It depends on FAD as a cofactor. FMN serves as cofactor. Phosphorylated by the cyclin-CDK PCL1-PHO85.

The protein resides in the endoplasmic reticulum membrane. It is found in the mitochondrion outer membrane. It localises to the cell membrane. It carries out the reaction 2 oxidized [cytochrome P450] + NADPH = 2 reduced [cytochrome P450] + NADP(+) + H(+). Functionally, this enzyme is required for electron transfer from NADP to cytochrome P450 in microsomes. It can also provide electron transfer to heme oxygenase and cytochrome B5. Involved in ergosterol biosynthesis. Has NADPH-dependent ferrireductase activity on the plasma membrane. The polypeptide is NADPH--cytochrome P450 reductase (Saccharomyces cerevisiae (strain ATCC 204508 / S288c) (Baker's yeast)).